A 68-amino-acid chain; its full sequence is UPF0253 protein VF_0662 (68 aa).

This sequence belongs to the UPF0253 family.

This Aliivibrio fischeri (strain ATCC 700601 / ES114) (Vibrio fischeri) protein is UPF0253 protein VF_0662.